We begin with the raw amino-acid sequence, 283 residues long: Elongation factor Ts (283 aa).

Residues 79 to 82 (TDFV) form an involved in Mg(2+) ion dislocation from EF-Tu region.

It belongs to the EF-Ts family.

It is found in the cytoplasm. Functionally, associates with the EF-Tu.GDP complex and induces the exchange of GDP to GTP. It remains bound to the aminoacyl-tRNA.EF-Tu.GTP complex up to the GTP hydrolysis stage on the ribosome. The protein is Elongation factor Ts of Shewanella putrefaciens (strain CN-32 / ATCC BAA-453).